The sequence spans 152 residues: Protein-export protein SecB (152 aa).

Belongs to the SecB family. Homotetramer, a dimer of dimers. One homotetramer interacts with 1 SecA dimer.

It localises to the cytoplasm. Its function is as follows. One of the proteins required for the normal export of preproteins out of the cell cytoplasm. It is a molecular chaperone that binds to a subset of precursor proteins, maintaining them in a translocation-competent state. It also specifically binds to its receptor SecA. In Thiobacillus denitrificans (strain ATCC 25259 / T1), this protein is Protein-export protein SecB.